Here is a 533-residue protein sequence, read N- to C-terminus: CTP synthase (533 aa).

The amidoligase domain stretch occupies residues 1 to 268; the sequence is MGETKYIFVT…DETILQKMGL (268 aa). S15 is a binding site for CTP. UTP is bound at residue S15. 16 to 21 serves as a coordination point for ATP; the sequence is SLGKGI. Position 56 (Y56) interacts with L-glutamine. D73 serves as a coordination point for ATP. 2 residues coordinate Mg(2+): D73 and E143. Residues 150–152, 189–194, and K225 each bind CTP; these read DIE and KTKPTQ. UTP-binding positions include 189–194 and K225; that span reads KTKPTQ. The Glutamine amidotransferase type-1 domain maps to 301–533; the sequence is YVELQDAYKS…VSFIKAAIDK (233 aa). G356 provides a ligand contact to L-glutamine. Catalysis depends on C383, which acts as the Nucleophile; for glutamine hydrolysis. Residues 384 to 387, E407, and R464 contribute to the L-glutamine site; that span reads LGMQ. Active-site residues include H509 and E511.

The protein belongs to the CTP synthase family. In terms of assembly, homotetramer.

It carries out the reaction UTP + L-glutamine + ATP + H2O = CTP + L-glutamate + ADP + phosphate + 2 H(+). The enzyme catalyses L-glutamine + H2O = L-glutamate + NH4(+). The catalysed reaction is UTP + NH4(+) + ATP = CTP + ADP + phosphate + 2 H(+). It functions in the pathway pyrimidine metabolism; CTP biosynthesis via de novo pathway; CTP from UDP: step 2/2. Allosterically activated by GTP, when glutamine is the substrate; GTP has no effect on the reaction when ammonia is the substrate. The allosteric effector GTP functions by stabilizing the protein conformation that binds the tetrahedral intermediate(s) formed during glutamine hydrolysis. Inhibited by the product CTP, via allosteric rather than competitive inhibition. Its function is as follows. Catalyzes the ATP-dependent amination of UTP to CTP with either L-glutamine or ammonia as the source of nitrogen. Regulates intracellular CTP levels through interactions with the four ribonucleotide triphosphates. This is CTP synthase from Bacteroides fragilis (strain YCH46).